Reading from the N-terminus, the 782-residue chain is MDEDVGLEATNYSRGDESRSEEQEKNVVRWRIVQQSTGPNPKPRHGHRAVVLKELIVIFGGGNEGMIDELHAYNTQKREWTAPQCCGDVPTPAAAFGAISLGNKIYRFGGMTEYGKYTNDLYELQSTRWEWRRLNPRVHSNGHLPCPRIGHSFVVSQKSQKAYVFGGLSNDLNDPKRNVPHYLDDLYVINLSGPQHLIWEKLNATGPGPISRESHTAVIYEKDSISRMVVYGGMNGVRLGDLWYLNLNTLHWTEIKFDDPRTGIPPMPRSLHSSVLIGDKMFVYGGWVPLLEHASTEQQTEKEWKCTSSLGCWNITEDRWVPLHLYCSDEDTIPRGRAGHCAAAVGDRMYIWSGRDGYRKAWSNQVCCRDMWLLDTILPEQPGKVQLGRAGFNSLEISWPIVQGASGYFLQIGFGDAKEQSVSPIKRATTSPRKQPSIVPPSQKETEQSPKKPQGTAPSIISTQGTTYTAPADPKPATDEGGLPQDLFEDTEKNETASPKRSNDAQSADSSTCEQKKTDESGLEEDSEKDQKPSDAGETDEMKEENGDDDLPWFDVGIIDKATINVTHYFNDRQQSLEKQLNDLIDHNAFKCVNDSVFTTEDKIPLINGQSYRFRVSAINGLGKGAWSETASCKTCVPGYPSAPSSIRITKSHEGAQLTWEPPSNTNISGKIIEYSVYLAVKNQSANSADSQLAFMRVYCGPQADCQVLQSNLGTAFVDQTNKPAIIFRIAARNEKGYGPATQVRWLQDQQKIPVRTNYPNNSGFIYQQHGGQQKRARFDHQ.

Residues 1–25 (MDEDVGLEATNYSRGDESRSEEQEK) are disordered. The segment covering 14 to 25 (RGDESRSEEQEK) has biased composition (basic and acidic residues). 5 Kelch repeats span residues 55–103 (LIVI…SLGN), 105–151 (IYRF…RIGH), 161–222 (KAYV…IYEK), 227–271 (RMVV…PRSL), and 280–324 (KMFV…VPLH). Phosphoserine occurs at positions 423, 431, and 449. The segment covering 423–434 (SPIKRATTSPRK) has biased composition (polar residues). Positions 423-553 (SPIKRATTSP…EENGDDDLPW (131 aa)) are disordered. Polar residues-rich tracts occupy residues 456-469 (TAPS…TTYT) and 496-513 (TASP…SSTC). Phosphoserine is present on Ser498. Residues 537-552 (GETDEMKEENGDDDLP) are compositionally biased toward acidic residues.

Interacts with daf-16/FOXO. Interacts with deacetylase sir-2.1. Interacts with the 14-3-3 family proteins ftt-2 and par-5. Phosphorylated at multiple serine residues. Phosphorylation is developmentally regulated, occurring in embryos but not L1 larvae. Phosphorylation may be cell-cycle-regulated.

Its subcellular location is the nucleus. Transcriptional coregulator. Involved in control of the cell cycle and in modulating mitotic histone phosphorylation. Plays a role in modulating lifespan by regulating the transcriptional activity of daf-16/Forkhead box protein O, in concert with protein deacetylase sir-2.1/SIRT1, and perhaps acting independently of the Insulin/IGF-1-like signaling (IIS) mediated pathway. Negatively modulates responses to environmental stresses, including oxidative stress, heat stress, and exposure to heavy metals; acting via regulation of the transcription factors daf-16 and skn-1. May play a role in pharyngeal development via positive modulation of expression of sup-35. The chain is Host cell factor homolog hcf-1 from Caenorhabditis elegans.